Reading from the N-terminus, the 344-residue chain is Phosphoribosylformylglycinamidine cyclo-ligase (344 aa).

This sequence belongs to the AIR synthase family.

It localises to the cytoplasm. The catalysed reaction is 2-formamido-N(1)-(5-O-phospho-beta-D-ribosyl)acetamidine + ATP = 5-amino-1-(5-phospho-beta-D-ribosyl)imidazole + ADP + phosphate + H(+). It participates in purine metabolism; IMP biosynthesis via de novo pathway; 5-amino-1-(5-phospho-D-ribosyl)imidazole from N(2)-formyl-N(1)-(5-phospho-D-ribosyl)glycinamide: step 2/2. This chain is Phosphoribosylformylglycinamidine cyclo-ligase, found in Glaesserella parasuis serovar 5 (strain SH0165) (Haemophilus parasuis).